The chain runs to 295 residues: MQTSALLLAAQALVASAGLIERQSCPSIHVFGARETTVGPGYGSAGTVVNLILNAYPGSTAEAIVYPACGGQSSCGGISYGNSAMQGTNAVASAVNSFNQRCPNTQIVLVGYSQGGQIMDNALCGGGDPGSGITNTAVPLTASAVTAVKAAILMGSPRYRAGFPYNVGTCTAQGFAARPAGFVCPSGSKIQNYCDSPDPYCCTGNNQAVHQGYGGVYGQAALTFVRSKLNSGGSPPTTPPTTPPTTPPTTPPTTPPPSGSCAALYGQCGGQGWNGATCCSQGTCRASNQWYSQCL.

Residues Met-1 to Ala-17 form the signal peptide. Cysteines 25 and 102 form a disulfide. Active-site residues include Ser-113, Asp-198, and His-210. Cys-184 and Cys-202 are disulfide-bonded. The segment at Lys-228 to Ser-258 is disordered. Over residues Pro-236–Ser-258 the composition is skewed to pro residues. The region spanning Ser-260 to Leu-295 is the CBM1 domain.

It belongs to the cutinase family. The 2 disulfide bonds play a critical role in holding the catalytic residues in juxta-position; reduction of the disulfide bridges results in the complete inactivation of the enzyme.

It is found in the secreted. The catalysed reaction is cutin + H2O = cutin monomers.. In terms of biological role, catalyzes the hydrolysis of complex carboxylic polyesters found in the cell wall of plants. May degrade cutin, a macromolecule that forms the structure of the plant cuticle. May also degrade suberin, a specialized macromolecule found in the cell wall of various plant tissues. Allows pathogenic fungi to penetrate through the cuticular barrier into the host plant during the initial stage of fungal infection. Involved in pathogenesis. The sequence is that of Cutinase 11 from Verticillium dahliae (Verticillium wilt).